Here is a 124-residue protein sequence, read N- to C-terminus: Small ribosomal subunit protein bS6 (124 aa).

A disordered region spans residues 96–124; that stretch reads ETAPSPMMKEVQREEARKAAQTTTEGQPA. The segment covering 115–124 has biased composition (polar residues); sequence AQTTTEGQPA.

It belongs to the bacterial ribosomal protein bS6 family.

Binds together with bS18 to 16S ribosomal RNA. This Cupriavidus metallidurans (strain ATCC 43123 / DSM 2839 / NBRC 102507 / CH34) (Ralstonia metallidurans) protein is Small ribosomal subunit protein bS6.